The sequence spans 464 residues: Fumarate hydratase class II (464 aa).

Residues 100-102, 131-134, 141-143, and threonine 189 each bind substrate; these read SGT, HPND, and SSN. The Proton donor/acceptor role is filled by histidine 190. Residue serine 320 is part of the active site. Substrate is bound by residues serine 321 and 326–328; that span reads KVN.

Belongs to the class-II fumarase/aspartase family. Fumarase subfamily. In terms of assembly, homotetramer.

The protein resides in the cytoplasm. It catalyses the reaction (S)-malate = fumarate + H2O. The protein operates within carbohydrate metabolism; tricarboxylic acid cycle; (S)-malate from fumarate: step 1/1. Functionally, involved in the TCA cycle. Catalyzes the stereospecific interconversion of fumarate to L-malate. This chain is Fumarate hydratase class II, found in Deinococcus radiodurans (strain ATCC 13939 / DSM 20539 / JCM 16871 / CCUG 27074 / LMG 4051 / NBRC 15346 / NCIMB 9279 / VKM B-1422 / R1).